The following is a 62-amino-acid chain: MAKTIIVKQVRSAARRPAVQTAVLKGLGLNKMHRTRELEDTPSIRGMVAKIPHLVEIIEERG.

Belongs to the universal ribosomal protein uL30 family. As to quaternary structure, part of the 50S ribosomal subunit.

This Cereibacter sphaeroides (strain ATCC 17029 / ATH 2.4.9) (Rhodobacter sphaeroides) protein is Large ribosomal subunit protein uL30.